The chain runs to 317 residues: 2-keto-3-deoxygluconate permease 1 (317 aa).

Helical transmembrane passes span 10–30 (VPGGMMVVPLVIGAVINTFAP), 47–67 (AAPLIGAFLLCMGAGISVKAA), 82–102 (LLVAIGIGLGVEHLFGAEGIF), 106–126 (GVAIIAAMSNSNGGLYAALVG), 134–154 (VGAISILSLNDGPFFTMIALG), 159–179 (ANIPIMALVAVLVPLVVGMIL), 195–215 (PLLIPFFAFALGAGINLEMLL), 217–237 (GGLAGILLGVLTTFVGGFFNI), 248–268 (IAGAAASSTAGNAVATPLAIA), and 279–299 (AAAAPLIAASVITTAILTPVL).

Belongs to the KdgT transporter family.

The protein resides in the cell inner membrane. It carries out the reaction 2-dehydro-3-deoxy-D-gluconate(in) + H(+)(in) = 2-dehydro-3-deoxy-D-gluconate(out) + H(+)(out). Functionally, catalyzes the proton-dependent uptake of 2-keto-3-deoxygluconate (KDG) into the cell. The protein is 2-keto-3-deoxygluconate permease 1 of Salmonella typhi.